The following is a 654-amino-acid chain: Fructose-1,6-bisphosphatase class 3 (654 aa).

Belongs to the FBPase class 3 family. It depends on Mn(2+) as a cofactor.

It carries out the reaction beta-D-fructose 1,6-bisphosphate + H2O = beta-D-fructose 6-phosphate + phosphate. The protein operates within carbohydrate biosynthesis; gluconeogenesis. The sequence is that of Fructose-1,6-bisphosphatase class 3 from Staphylococcus haemolyticus (strain JCSC1435).